Here is a 523-residue protein sequence, read N- to C-terminus: Putative oxidoreductase TDA3 (523 aa).

Residues 157–172 (NSSLSSSGSSLKNDSA) show a composition bias toward low complexity. The segment at 157 to 189 (NSSLSSSGSSLKNDSASNEEEGSDIHVSSSVPS) is disordered. 3 positions are modified to phosphoserine: Ser-189, Ser-204, and Ser-306.

The protein belongs to the TDA3 family. In terms of assembly, interacts with BTN2.

Its subcellular location is the cytoplasm. The protein localises to the late endosome. Its function is as follows. Putative oxidoreductase that negatively regulates the retrieval of cargo from late endosomes to the Golgi. Regulates YIF1 and KEX2 localization. Required for fast DNA replication. The polypeptide is Putative oxidoreductase TDA3 (TDA3) (Saccharomyces cerevisiae (strain ATCC 204508 / S288c) (Baker's yeast)).